The sequence spans 345 residues: Glycerol-3-phosphate dehydrogenase [NAD(P)+] (345 aa).

S23, Y24, H44, and K118 together coordinate NADPH. 3 residues coordinate sn-glycerol 3-phosphate: K118, G147, and T149. A151 contributes to the NADPH binding site. Sn-glycerol 3-phosphate contacts are provided by K203, D256, S266, R267, and N268. The active-site Proton acceptor is K203. R267 serves as a coordination point for NADPH. Residues V291 and E293 each coordinate NADPH.

The protein belongs to the NAD-dependent glycerol-3-phosphate dehydrogenase family.

It is found in the cytoplasm. It catalyses the reaction sn-glycerol 3-phosphate + NAD(+) = dihydroxyacetone phosphate + NADH + H(+). It carries out the reaction sn-glycerol 3-phosphate + NADP(+) = dihydroxyacetone phosphate + NADPH + H(+). It participates in membrane lipid metabolism; glycerophospholipid metabolism. Its function is as follows. Catalyzes the reduction of the glycolytic intermediate dihydroxyacetone phosphate (DHAP) to sn-glycerol 3-phosphate (G3P), the key precursor for phospholipid synthesis. In Vibrio parahaemolyticus serotype O3:K6 (strain RIMD 2210633), this protein is Glycerol-3-phosphate dehydrogenase [NAD(P)+].